Reading from the N-terminus, the 572-residue chain is Squalene synthase (572 aa).

The next 2 membrane-spanning stretches (helical) occupy residues 316–336 (SVFN…ELMF) and 492–512 (FFLI…LITW).

This sequence belongs to the phytoene/squalene synthase family. In terms of assembly, monomer. The cofactor is Mg(2+).

The protein resides in the endoplasmic reticulum membrane. The catalysed reaction is 2 (2E,6E)-farnesyl diphosphate + NADPH + H(+) = squalene + 2 diphosphate + NADP(+). The enzyme catalyses 2 (2E,6E)-farnesyl diphosphate + NADH + H(+) = squalene + 2 diphosphate + NAD(+). It participates in terpene metabolism; lanosterol biosynthesis; lanosterol from farnesyl diphosphate: step 1/3. In terms of biological role, catalyzes the condensation of 2 two farnesyl pyrophosphate moieties to form squalene. It is the first committed enzyme of the sterol biosynthesis pathway. Required for the biosynthesis of ergosterol. This is Squalene synthase (ERG9) from Mycosarcoma maydis (Corn smut fungus).